We begin with the raw amino-acid sequence, 729 residues long: Hydroxamate siderophore receptor FhuE (729 aa).

An N-terminal signal peptide occupies residues 1-36; the sequence is MLSTQFNRDNQYQAITKPSLLAGCIALALLPSAAFA. Residues 42–49 carry the TonB box motif; that stretch reads ETVIVEGS. Residues 48–72 form a disordered region; that stretch reads GSATAPDDGENDYSVTSTSAGTKMQ. Polar residues predominate over residues 60-72; the sequence is YSVTSTSAGTKMQ. The region spanning 74–183 is the TBDR plug domain; the sequence is TQRDIPQSVT…PSAAINMVRK (110 aa). The Fe(III)-coprogen site is built by arginine 117, arginine 142, tryptophan 275, tyrosine 357, asparagine 373, and tryptophan 416. One can recognise a TBDR beta-barrel domain in the interval 189–729; that stretch reads EFKGDVSAEY…NFSITGTYQF (541 aa). Residues 712–729 carry the TonB C-terminal box motif; that stretch reads SIVYGTPRNFSITGTYQF.

It belongs to the TonB-dependent receptor family.

Its subcellular location is the cell outer membrane. Involved in the active transport across the outer membrane of iron complexed with linear hydroxamate siderophores coprogen, rhodotorulic acid and ferrioxamine B. Binds Fe-coprogen with high affinity, rhodotorulic acid to a lesser extent, and weakly to ferrioxamine B. Selective for planar siderophores. Does not use cyclic siderophores ferrichrome nor ferrioxamine E as substrates. This Escherichia coli (strain K12) protein is Hydroxamate siderophore receptor FhuE.